A 142-amino-acid polypeptide reads, in one-letter code: Large ribosomal subunit protein uL13c (142 aa).

This sequence belongs to the universal ribosomal protein uL13 family. In terms of assembly, part of the 50S ribosomal subunit.

Its subcellular location is the plastid. The protein localises to the chloroplast. The polypeptide is Large ribosomal subunit protein uL13c (Porphyra purpurea (Red seaweed)).